A 291-amino-acid polypeptide reads, in one-letter code: Probable endonuclease 4 (291 aa).

Residues His-72, His-112, Glu-147, Asp-181, His-184, His-215, Asp-228, His-230, and Glu-260 each contribute to the Zn(2+) site.

It belongs to the AP endonuclease 2 family. Zn(2+) is required as a cofactor.

The enzyme catalyses Endonucleolytic cleavage to 5'-phosphooligonucleotide end-products.. Endonuclease IV plays a role in DNA repair. It cleaves phosphodiester bonds at apurinic or apyrimidinic (AP) sites, generating a 3'-hydroxyl group and a 5'-terminal sugar phosphate. The protein is Probable endonuclease 4 of Mycoplasma genitalium (strain ATCC 33530 / DSM 19775 / NCTC 10195 / G37) (Mycoplasmoides genitalium).